Reading from the N-terminus, the 456-residue chain is Argininosuccinate lyase (456 aa).

It belongs to the lyase 1 family. Argininosuccinate lyase subfamily.

It localises to the cytoplasm. It carries out the reaction 2-(N(omega)-L-arginino)succinate = fumarate + L-arginine. The protein operates within amino-acid biosynthesis; L-arginine biosynthesis; L-arginine from L-ornithine and carbamoyl phosphate: step 3/3. In Listeria monocytogenes serovar 1/2a (strain ATCC BAA-679 / EGD-e), this protein is Argininosuccinate lyase.